We begin with the raw amino-acid sequence, 496 residues long: MSGLPRSVPDVLDPLGPGAPVLVAGGRVTGQAVAAVLTRFGATPTVCDDDPVMLRPHAERGLPTVSSSDAVQQITGYALVVASPGFSPATPLLAAAAAAGVPIWGDVELAWRLDAAGCYGPPRSWLVVTGTNGKTTTTSMLHAMLIAGGRRAVLCGNIGSAVLDVLDEPAELLAVELSSFQLHWAPSLRPEAGAVLNIAEDHLDWHATMAEYTAAKARVLTGGVAVAGLDDSRAAALLDGSPAQVRVGFRLGEPAARELGVRDAHLVDRAFSDDLTLLPVASIPVPGPVGVLDALAAAALARSVGVPAGAIADAVTSFRVGRHRAEVVAVADGITYVDDSKATNPHAARASVLAYPRVVWIAGGLLKGASLHAEVAAMASRLVGAVLIGRDRAAVAEALSRHAPDVPVVQVVAGEDTGMPATVEVPVACVLDVAKDDKAGETVGAAVMTAAVAAARRMAQPGDTVLLAPAGASFDQFTGYADRGEAFATAVRAVIR.

Residue 130–136 (GTNGKTT) coordinates ATP.

The protein belongs to the MurCDEF family. As to quaternary structure, interacts with PknA. Post-translationally, phosphorylated by PknA.

Its subcellular location is the cytoplasm. It catalyses the reaction UDP-N-acetyl-alpha-D-muramoyl-L-alanine + D-glutamate + ATP = UDP-N-acetyl-alpha-D-muramoyl-L-alanyl-D-glutamate + ADP + phosphate + H(+). It functions in the pathway cell wall biogenesis; peptidoglycan biosynthesis. In terms of biological role, cell wall formation. Catalyzes the addition of glutamate to the nucleotide precursor UDP-N-acetylmuramoyl-L-alanine (UMA). This is UDP-N-acetylmuramoylalanine--D-glutamate ligase from Mycobacterium tuberculosis (strain ATCC 25177 / H37Ra).